Here is a 261-residue protein sequence, read N- to C-terminus: Ethanolamine ammonia-lyase small subunit (261 aa).

The adenosylcob(III)alamin site is built by Val157, Glu178, and Cys207.

This sequence belongs to the EutC family. The basic unit is a heterodimer which dimerizes to form tetramers. The heterotetramers trimerize; 6 large subunits form a core ring with 6 small subunits projecting outwards. Requires adenosylcob(III)alamin as cofactor.

It localises to the bacterial microcompartment. The enzyme catalyses ethanolamine = acetaldehyde + NH4(+). It functions in the pathway amine and polyamine degradation; ethanolamine degradation. Functionally, catalyzes the deamination of various vicinal amino-alcohols to oxo compounds. Allows this organism to utilize ethanolamine as the sole source of nitrogen and carbon in the presence of external vitamin B12. The polypeptide is Ethanolamine ammonia-lyase small subunit (Rhodopseudomonas palustris (strain BisA53)).